A 427-amino-acid chain; its full sequence is Citrate synthase (427 aa).

Lys283 is modified (N6-acetyllysine). Residues His306 and Asp363 contribute to the active site.

This sequence belongs to the citrate synthase family. As to quaternary structure, homohexamer.

The enzyme catalyses oxaloacetate + acetyl-CoA + H2O = citrate + CoA + H(+). Its pathway is carbohydrate metabolism; tricarboxylic acid cycle; isocitrate from oxaloacetate: step 1/2. This Escherichia coli O6:H1 (strain CFT073 / ATCC 700928 / UPEC) protein is Citrate synthase (gltA).